Consider the following 835-residue polypeptide: MIGILKKVFDVNQRQIKRMQKTVEQIDALESSIKPLTDEQLKGKTLEFKERLTKGETVDDLLPEAFAVVREAATRVLGMRPYGVQLMGGIALHEGNISEMKTGEGKTLTSTLPVYLNALTGKGVHVVTVNEYLAQRDASEMGQLHEFLGLTVGINLNSMSREEKQEAYAADITYSTNNELGFDYLRDNMVLYKEQCVQRPLHFAIIDEVDSILVDEARTPLIISGQAQKSTELYMFANAFVRTLENEKDYSFDVKTKNVMLTEDGITKAEKAFHIENLFDLKHVALLHHINQGLRAHVVMHRDTDYVVQEGEIVIVDQFTGRLMKGRRYSEGLHQAIEAKEGVEIQNESMTLATITFQNYFRMYEKLSGMTGTAKTEEEEFRNIYNMNVIVIPTNKPIIRDDRADLIFKSMEGKFNAVVEDIVNRHKKGQPVLVGTVAIETSELISKMLTRKGVRHNILNAKNHAREADIIAEAGIKGAVTIATNMAGRGTDIKLGDDVKNVGLAVIGTERHESRRIDNQLRGRAGRQGDPGVTQFYLSMEDELMRRFGSDNMKAMMDRLGMDDSQPIESKMVSRAVESAQKRVEGNNYDARKQLLQYDDVLRQQREVIYKQRQEVMESDNLRGIIEGMMKSTVERAVALHTQEEIEEDWNIKGLVDYLNTNLLQDGDVKEEELRRLAPEEMSEPIIAKLIERYNEKEKLMPEEQMREFEKVVVFRVVDTKWTEHIDAMDHLREGIHLRAYGQIDPLREYQMEGFAMFESMVASIEEEISRYIMKAEIEQNLERQEVVQGEAVHPSSDGEEAKKKPVVKGDQVGRNDLCKCGSGKKYKNCCGIVQ.

Residues Gln85, 103-107 (GEGKT), and Asp492 each bind ATP. The segment at 788 to 807 (VQGEAVHPSSDGEEAKKKPV) is disordered. Zn(2+) contacts are provided by Cys819, Cys821, Cys830, and Cys831.

Belongs to the SecA family. Monomer and homodimer. Part of the essential Sec protein translocation apparatus which comprises SecA, SecYEG and auxiliary proteins SecDF. Other proteins may also be involved. The cofactor is Zn(2+).

The protein localises to the cell membrane. Its subcellular location is the cytoplasm. The enzyme catalyses ATP + H2O + cellular proteinSide 1 = ADP + phosphate + cellular proteinSide 2.. Part of the Sec protein translocase complex. Interacts with the SecYEG preprotein conducting channel. Has a central role in coupling the hydrolysis of ATP to the transfer of proteins into and across the cell membrane, serving as an ATP-driven molecular motor driving the stepwise translocation of polypeptide chains across the membrane. This chain is Protein translocase subunit SecA, found in Bacillus cereus (strain B4264).